The following is a 386-amino-acid chain: 1-deoxy-D-xylulose 5-phosphate reductoisomerase (386 aa).

T10, G11, S12, I13, G36, N38, and N122 together coordinate NADPH. K123 is a 1-deoxy-D-xylulose 5-phosphate binding site. E124 contacts NADPH. D148 is a binding site for Mn(2+). 4 residues coordinate 1-deoxy-D-xylulose 5-phosphate: S149, E150, S174, and H197. Mn(2+) is bound at residue E150. G203 contributes to the NADPH binding site. 1-deoxy-D-xylulose 5-phosphate-binding residues include S210, N215, K216, and E219. E219 is a binding site for Mn(2+).

This sequence belongs to the DXR family. Mg(2+) is required as a cofactor. Mn(2+) serves as cofactor.

The catalysed reaction is 2-C-methyl-D-erythritol 4-phosphate + NADP(+) = 1-deoxy-D-xylulose 5-phosphate + NADPH + H(+). It participates in isoprenoid biosynthesis; isopentenyl diphosphate biosynthesis via DXP pathway; isopentenyl diphosphate from 1-deoxy-D-xylulose 5-phosphate: step 1/6. Catalyzes the NADPH-dependent rearrangement and reduction of 1-deoxy-D-xylulose-5-phosphate (DXP) to 2-C-methyl-D-erythritol 4-phosphate (MEP). The polypeptide is 1-deoxy-D-xylulose 5-phosphate reductoisomerase (Geotalea uraniireducens (strain Rf4) (Geobacter uraniireducens)).